Here is a 364-residue protein sequence, read N- to C-terminus: Anthranilate phosphoribosyltransferase (364 aa).

Polar residues predominate over residues 1–10 (MTSGPSQPFP). Positions 1–22 (MTSGPSQPFPSASGPDDGPSWP) are disordered. 5-phospho-alpha-D-ribose 1-diphosphate-binding positions include G101, 104–105 (GD), T109, 111–114 (NLST), 129–137 (KHGNRAASS), and G141. G101 serves as a coordination point for anthranilate. S113 serves as a coordination point for Mg(2+). N132 is an anthranilate binding site. R187 provides a ligand contact to anthranilate. Residues D245 and E246 each coordinate Mg(2+).

This sequence belongs to the anthranilate phosphoribosyltransferase family. Homodimer. It depends on Mg(2+) as a cofactor.

The enzyme catalyses N-(5-phospho-beta-D-ribosyl)anthranilate + diphosphate = 5-phospho-alpha-D-ribose 1-diphosphate + anthranilate. Its pathway is amino-acid biosynthesis; L-tryptophan biosynthesis; L-tryptophan from chorismate: step 2/5. Catalyzes the transfer of the phosphoribosyl group of 5-phosphorylribose-1-pyrophosphate (PRPP) to anthranilate to yield N-(5'-phosphoribosyl)-anthranilate (PRA). This is Anthranilate phosphoribosyltransferase from Mycolicibacterium smegmatis (strain ATCC 700084 / mc(2)155) (Mycobacterium smegmatis).